The sequence spans 132 residues: uncharacterized protein (132 aa).

3 helical membrane-spanning segments follow: residues 18–38 (MLFI…FIGI), 50–70 (IIYF…GVFI), and 71–91 (VVPL…LYLI).

The protein resides in the cell membrane. This is an uncharacterized protein from Bacillus subtilis (strain 168).